A 246-amino-acid chain; its full sequence is UDP-N-acetyl-D-mannosaminuronic acid transferase (246 aa).

The protein belongs to the glycosyltransferase 26 family.

The catalysed reaction is UDP-N-acetyl-alpha-D-mannosaminouronate + N-acetyl-alpha-D-glucosaminyl-di-trans,octa-cis-undecaprenyl diphosphate = beta-D-ManNAcA-(1-&gt;4)-alpha-D-GlcNAc-di-trans,octa-cis-undecaprenyl diphosphate + UDP + H(+). The protein operates within bacterial outer membrane biogenesis; enterobacterial common antigen biosynthesis. Catalyzes the synthesis of Und-PP-GlcNAc-ManNAcA (Lipid II), the second lipid-linked intermediate involved in enterobacterial common antigen (ECA) synthesis. This chain is UDP-N-acetyl-D-mannosaminuronic acid transferase, found in Escherichia coli O1:K1 / APEC.